Consider the following 1328-residue polypeptide: Peroxidasin homolog pxn-2 (1328 aa).

Positions 1–16 are cleaved as a signal peptide; that stretch reads MLLEFLLLIGISLSTA. In terms of domain architecture, LRRNT spans 17 to 45; sequence CPSECRCAGLDVHCEGKNLTAIPGHIPIA. An N-linked (GlcNAc...) asparagine glycan is attached at Asn-34. 6 LRR repeats span residues 42 to 66, 67 to 90, 92 to 114, 116 to 137, 138 to 161, and 164 to 191; these read IPIA…NFQA, LPNL…LLDS, PGLK…STAP, ALVS…LVSH, SPYM…FFNS, and VPTL…QFAD. A glycan (N-linked (GlcNAc...) asparagine) is linked at Asn-77. N-linked (GlcNAc...) asparagine glycosylation occurs at Asn-220. The disordered stretch occupies residues 305 to 332; it reads KKMQASSSTEPPITTTTMEPMTTSTMDS. Residues 310–332 show a composition bias toward low complexity; that stretch reads SSSTEPPITTTTMEPMTTSTMDS. 2 Ig-like C2-type domains span residues 346-438 and 445-532; these read PEID…FSVS and PVII…ANLL. A disulfide bond links Cys-373 and Cys-422. Asn-403 and Asn-455 each carry an N-linked (GlcNAc...) asparagine glycan. A disulfide bond links Cys-466 and Cys-516. N-linked (GlcNAc...) asparagine glycosylation occurs at Asn-630. Cys-660 and Cys-676 are joined by a disulfide. Asp-754 serves as a coordination point for heme b. The Proton acceptor role is filled by His-755. Residue Asp-756 participates in Ca(2+) binding. 2 disulfides stabilise this stretch: Cys-775–Cys-785 and Cys-779–Cys-807. N-linked (GlcNAc...) asparagine glycosylation is present at Asn-776. Residues Thr-839, Tyr-841, Asp-843, and Ser-845 each contribute to the Ca(2+) site. N-linked (GlcNAc...) asparagine glycosylation is present at Asn-894. The heme b site is built by Glu-913 and His-1008. One copy of the LRR 7 repeat lies at 1085-1109; sequence ALDLAALNIQRGRDHGLPSWTEYRK. 2 disulfide bridges follow: Cys-1111/Cys-1168 and Cys-1209/Cys-1236. N-linked (GlcNAc...) asparagine glycans are attached at residues Asn-1112 and Asn-1128. Residues 1204 to 1225 form an LRR 8 repeat; that stretch reads LSKIICTNGDDIDRIQRDIFVY. Asn-1228 carries an N-linked (GlcNAc...) asparagine glycan. The disordered stretch occupies residues 1266–1297; sequence IGGDEKAKRRKRRHHHSKKSCHDKGKRRKSGD. The segment covering 1273–1295 has biased composition (basic residues); that stretch reads KRRKRRHHHSKKSCHDKGKRRKS. N-linked (GlcNAc...) asparagine glycosylation is present at Asn-1300.

It belongs to the peroxidase family. XPO subfamily. Requires Ca(2+) as cofactor. It depends on heme b as a cofactor. As to expression, expressed in vulval muscles and in some neurons including PVQ. Expressed in the hypodermis and in coelomocytes.

The protein resides in the secreted. It is found in the extracellular space. Its subcellular location is the extracellular matrix. The protein localises to the basement membrane. The enzyme catalyses L-lysyl-[collagen] + L-methionyl-[collagen] + H2O2 = [collagen]-L-lysyl-N-S-L-methionyl-[collagen] + 2 H2O + H(+). It carries out the reaction bromide + H2O2 = hypobromite + H2O. The catalysed reaction is L-lysyl-[collagen] + L-methionyl-[collagen] + hypobromite = [collagen]-L-lysyl-N-S-L-methionyl-[collagen] + bromide + H2O + H(+). It catalyses the reaction L-tyrosyl-[protein] + bromide + H2O2 + H(+) = 3-bromo-L-tyrosyl-[protein] + 2 H2O. The enzyme catalyses hypobromite + L-tyrosyl-[protein] + H(+) = 3-bromo-L-tyrosyl-[protein] + H2O. In terms of biological role, catalyzes the two-electron oxidation of bromide by hydrogen peroxide and generates hypobromite as a reactive intermediate which mediates the formation of sulfilimine cross-links between methionine and hydroxylysine residues within an uncross-linked collagen IV/COL4A1 NC1 hexamer. Required for embryonic morphogenesis playing a role in epidermal elongation at the twofold stage of embryonic development. Required post-embryonically for basement membrane integrity and muscle-epidermal attachments, and specifically in the function of basement membrane components such as the type IV collagens. May have a role in inhibiting axon regeneration. May functionally antagonize the peroxidasin pxn-1. The chain is Peroxidasin homolog pxn-2 from Caenorhabditis elegans.